Reading from the N-terminus, the 365-residue chain is tRNA(Met) cytidine acetate ligase (365 aa).

ATP is bound by residues 7 to 20 (IAEF…HKYL), glycine 96, asparagine 152, and arginine 175.

This sequence belongs to the TmcAL family.

It is found in the cytoplasm. It catalyses the reaction cytidine(34) in elongator tRNA(Met) + acetate + ATP = N(4)-acetylcytidine(34) in elongator tRNA(Met) + AMP + diphosphate. Catalyzes the formation of N(4)-acetylcytidine (ac(4)C) at the wobble position of elongator tRNA(Met), using acetate and ATP as substrates. First activates an acetate ion to form acetyladenylate (Ac-AMP) and then transfers the acetyl group to tRNA to form ac(4)C34. The sequence is that of tRNA(Met) cytidine acetate ligase from Streptococcus pneumoniae serotype 19F (strain G54).